Consider the following 117-residue polypeptide: uncharacterized protein (117 aa).

Residues Met1–Gly38 form the signal peptide.

The protein resides in the secreted. This is an uncharacterized protein from Homo sapiens (Human).